A 193-amino-acid polypeptide reads, in one-letter code: Threonylcarbamoyl-AMP synthase (193 aa).

Positions 14–193 constitute a YrdC-like domain; the sequence is SRLQQRARKQ…IDLESGRVLR (180 aa).

This sequence belongs to the SUA5 family. TsaC subfamily.

Its subcellular location is the cytoplasm. It carries out the reaction L-threonine + hydrogencarbonate + ATP = L-threonylcarbamoyladenylate + diphosphate + H2O. Its function is as follows. Required for the formation of a threonylcarbamoyl group on adenosine at position 37 (t(6)A37) in tRNAs that read codons beginning with adenine. Catalyzes the conversion of L-threonine, HCO(3)(-)/CO(2) and ATP to give threonylcarbamoyl-AMP (TC-AMP) as the acyladenylate intermediate, with the release of diphosphate. The chain is Threonylcarbamoyl-AMP synthase from Chromobacterium violaceum (strain ATCC 12472 / DSM 30191 / JCM 1249 / CCUG 213 / NBRC 12614 / NCIMB 9131 / NCTC 9757 / MK).